The chain runs to 356 residues: S-adenosylmethionine:tRNA ribosyltransferase-isomerase (356 aa).

The protein belongs to the QueA family. In terms of assembly, monomer.

The protein resides in the cytoplasm. It catalyses the reaction 7-aminomethyl-7-carbaguanosine(34) in tRNA + S-adenosyl-L-methionine = epoxyqueuosine(34) in tRNA + adenine + L-methionine + 2 H(+). Its pathway is tRNA modification; tRNA-queuosine biosynthesis. In terms of biological role, transfers and isomerizes the ribose moiety from AdoMet to the 7-aminomethyl group of 7-deazaguanine (preQ1-tRNA) to give epoxyqueuosine (oQ-tRNA). This is S-adenosylmethionine:tRNA ribosyltransferase-isomerase from Escherichia coli (strain UTI89 / UPEC).